A 67-amino-acid polypeptide reads, in one-letter code: Ferredoxin (67 aa).

4Fe-4S ferredoxin-type domains are found at residues 3 to 31 (WKVSVDQDTCIGDAICASLCPDVFEMNDE) and 36 to 67 (PKVEIIEDEELYNCAKEAMESCPVSAITIEEA). The [4Fe-4S] cluster site is built by Cys12, Asp15, and Cys18. Cys22 and Cys49 form a disulfide bridge. Cys57 contributes to the [4Fe-4S] cluster binding site.

[4Fe-4S] cluster is required as a cofactor. [3Fe-4S] cluster serves as cofactor.

Ferredoxins are iron-sulfur proteins that transfer electrons in a wide variety of metabolic reactions. This Pyrococcus abyssi (strain GE5 / Orsay) protein is Ferredoxin (fdxA).